A 1446-amino-acid polypeptide reads, in one-letter code: ABC transporter G family member 53 (1446 aa).

The region spanning 153 to 426 (ANTLHITPNR…FESVGFKCPE (274 aa)) is the ABC transporter 1 domain. 186 to 193 (GPPGAGKT) serves as a coordination point for ATP. Residues 504–717 (ELLKANIDRE…AQNAISVNEF (214 aa)) enclose the ABC transmembrane type-2 1 domain. 6 helical membrane passes run 523–543 (VYIFKATQLTLMTFIAMTVFI), 555–575 (GGIYMGALFFGILMIMFNGLA), 610–630 (TPLSLLNVTIWVFITYYVIGF), 641–661 (FLLLLVMNETSSGLFRFIAGF), 666–686 (VVASTMGSFCILIFMLLGGFI), and 752–772 (IGVGALLGYVLLFNILYTICL). The ABC transporter 2 domain occupies 849–1101 (ITFEDIRYSV…ELIRYFESIE (253 aa)). Residue 894 to 901 (GVSGAGKT) coordinates ATP. Residues 1174–1388 (TQCLACLWKQ…TLYGLVTSQF (215 aa)) enclose the ABC transmembrane type-2 2 domain. Transmembrane regions (helical) follow at residues 1195–1215 (AVKYFYTIVIALLFGTMFWGV), 1225–1242 (LFNAMGSMYASVLFMGVQ), 1281–1301 (LPYILVQSLIYGVLVYAMIGF), 1308–1328 (FFWYLFFMYFTLSYYTFYGMM), 1338–1358 (VASVVSTAFYAIWNLFSGFII), 1363–1383 (IPIWWRWYYWVCPVAWTLYGL), and 1415–1435 (FLWVVAVMVVSFAVLFAFLFG).

This sequence belongs to the ABC transporter superfamily. ABCG family. PDR (TC 3.A.1.205) subfamily.

The protein resides in the membrane. Functionally, may be a general defense protein. This chain is ABC transporter G family member 53, found in Oryza sativa subsp. japonica (Rice).